A 191-amino-acid polypeptide reads, in one-letter code: Peptidyl-tRNA hydrolase (191 aa).

TRNA is bound at residue Tyr-14. His-19 functions as the Proton acceptor in the catalytic mechanism. TRNA contacts are provided by Tyr-64, Asn-66, and Asn-112.

Belongs to the PTH family. As to quaternary structure, monomer.

The protein localises to the cytoplasm. The catalysed reaction is an N-acyl-L-alpha-aminoacyl-tRNA + H2O = an N-acyl-L-amino acid + a tRNA + H(+). In terms of biological role, hydrolyzes ribosome-free peptidyl-tRNAs (with 1 or more amino acids incorporated), which drop off the ribosome during protein synthesis, or as a result of ribosome stalling. Functionally, catalyzes the release of premature peptidyl moieties from peptidyl-tRNA molecules trapped in stalled 50S ribosomal subunits, and thus maintains levels of free tRNAs and 50S ribosomes. The polypeptide is Peptidyl-tRNA hydrolase (Clostridium beijerinckii (strain ATCC 51743 / NCIMB 8052) (Clostridium acetobutylicum)).